We begin with the raw amino-acid sequence, 565 residues long: uncharacterized protein (565 aa).

5 helical membrane-spanning segments follow: residues 14–34 (LAIFLTLFVGFWIGKIKIGKF), 36–56 (LGVVTSVLLVGVLVGQLDITV), 92–112 (MGFAAIMCVFCLIIPWILAKI), 117–137 (VGEAAGLLAGSQTISAVIGVA), and 157–177 (IIPVSYAVTYIFGTAGSAWVL). The RCK C-terminal domain maps to 296–381 (PEVLDPQLLD…VDAAAKQLGY (86 aa)). 6 helical membrane-spanning segments follow: residues 391–411 (MIFVGLGILIGGLIGALSIHM), 414–434 (VPISLSTSGGALIGGLFFGWL), 448–468 (ALWILDNVGLNMFIAVVGIAA), 481–501 (LSLFIVGALATSIPLIAGILM), 508–530 (FHPALVLGCTAGARTTTAALGAI), and 545–565 (VTYAVGNTLLIIWGVVIVLLM).

This sequence belongs to the AAE transporter (TC 2.A.81) family.

It is found in the cell membrane. This is an uncharacterized protein from Bacteroides fragilis (strain YCH46).